Consider the following 890-residue polypeptide: Alanine--tRNA ligase (890 aa).

Residues histidine 572, histidine 576, cysteine 674, and histidine 678 each contribute to the Zn(2+) site.

It belongs to the class-II aminoacyl-tRNA synthetase family. It depends on Zn(2+) as a cofactor.

It is found in the cytoplasm. The catalysed reaction is tRNA(Ala) + L-alanine + ATP = L-alanyl-tRNA(Ala) + AMP + diphosphate. Functionally, catalyzes the attachment of alanine to tRNA(Ala) in a two-step reaction: alanine is first activated by ATP to form Ala-AMP and then transferred to the acceptor end of tRNA(Ala). Also edits incorrectly charged Ser-tRNA(Ala) and Gly-tRNA(Ala) via its editing domain. In Prochlorococcus marinus (strain MIT 9211), this protein is Alanine--tRNA ligase.